Consider the following 264-residue polypeptide: MDTRPIGFLDSGVGGLTVVCELIRQLPHEKIVYIGDSARAPYGPRPKKQIKEYTWELVNFLLTQNVKMIVFACNTATAVAWEEVKAALDIPVLGVVLPGASAAIKSTTKGQVGVIGTPMTVASDIYRKKIQLLAPSVQVRSLACPKFVPIVESNEMCSSIAKKIVYDSLAPLVGKIDTLVLGCTHYPLLRPIIQNVMGPSVKLIDSGAECVRDISVLLNYFDINGNYHQKAVEHRFFTTANSEIFQEIASIWLKQKINVEHVTL.

Residues 10–11 (DS) and 42–43 (YG) contribute to the substrate site. Cysteine 73 functions as the Proton donor/acceptor in the catalytic mechanism. Substrate is bound at residue 74 to 75 (NT). Catalysis depends on cysteine 183, which acts as the Proton donor/acceptor. Position 184-185 (184-185 (TH)) interacts with substrate.

Belongs to the aspartate/glutamate racemases family.

It carries out the reaction L-glutamate = D-glutamate. It functions in the pathway cell wall biogenesis; peptidoglycan biosynthesis. Provides the (R)-glutamate required for cell wall biosynthesis. The chain is Glutamate racemase from Streptococcus pyogenes serotype M4 (strain MGAS10750).